The sequence spans 176 residues: Interleukin-20 (176 aa).

The N-terminal stretch at Met-1 to Gly-24 is a signal peptide. Cystine bridges form between Cys-33/Cys-126, Cys-80/Cys-132, and Cys-81/Cys-134.

The protein belongs to the IL-10 family. In terms of assembly, forms a 1:1:1 heterotrimeric complex with its primary high-affinity heterodimeric receptor IL20RA/IL20RB.

The protein localises to the secreted. Its function is as follows. Pro-inflammatory and angiogenic cytokine mainly secreted by monocytes and skin keratinocytes that plays crucial roles in immune responses, regulation of inflammatory responses, hemopoiesis, as well as epidermal cell and keratinocyte differentiation. Enhances tissue remodeling and wound-healing activities and restores the homeostasis of epithelial layers during infection and inflammatory responses to maintain tissue integrity. Affects multiple actin-mediated functions in activated neutrophils leading to inhibition of phagocytosis, granule exocytosis, and migration. Exert its effects via the type I IL-20 receptor complex consisting of IL20RA and IL20RB. Alternatively, can mediate its activity through a second receptor complex called type II IL-20 receptor complex composed of IL22RA1 and IL20RB. Acts as an arteriogenic and vascular remodeling factory by activating a range of signaling processes including phosphorylations of JAK2 and STAT5 as well as activation of the serine and threonine kinases AKT and ERK1/2. Alternatively, can activate STAT3 phosphorylation and transcriptional activity in a JAK2, ERK1/2 and p38 MAPK-dependent manner in keratinocytes. The protein is Interleukin-20 (Il20) of Mus musculus (Mouse).